The chain runs to 147 residues: Hemoglobin subunit beta-3 (147 aa).

In terms of domain architecture, Globin spans 3 to 147 (HWTAEEKAVI…LVDALSHSYH (145 aa)). Heme b-binding residues include histidine 64 and histidine 93.

It belongs to the globin family. In terms of assembly, heterotetramer of two alpha chains and two beta chains. Red blood cells.

Functionally, this is a tadpole (larval) beta chain. In Aquarana catesbeiana (American bullfrog), this protein is Hemoglobin subunit beta-3.